The sequence spans 182 residues: Functional amyloid subunit FapB (182 aa).

The signal sequence occupies residues 1–18; sequence MTHSWLLLTVLGCSAAMA. The stretch at 22 to 58 is one FapB_R1 repeat; it reads NQALIDNAGKQYTGVLSVNQAAGNQHQQINSRAISLG. The stretch at 80–114 is one FapB_R2 repeat; that stretch reads SAAIQGSAFSNGNGILGVNQSAGANNQMINAVRIS. The FapB_R3 repeat unit spans residues 150–180; sequence SDQAFTGSRGVVQVNQSAGVGNRMANTLGVT.

This sequence belongs to the FapB/FapC family. Forms fibrils in vitro; in the presence of FapA the fibrils are slightly narrower. A minor component of purified amyloid fibrils. Fibrils are resistant to boiling in 2% (weight/vol) SDS and require &gt;90% (vol/vol) formic acid to dissolve.

The protein resides in the fimbrium. The protein localises to the secreted. In terms of biological role, a minor component of the functional amyloid in this bacterium. Probably nucleates fibril formation; FapB nucleates fibrillation its own, FapA inhibits FapB fibril elongation. Upon overexpression of the endogenous six-gene locus (fapA-fapF) in situ, cells form large clumps during liquid growth, make large amounts of biofilm and produce amyloid fibrils. Expression of the 6 gene operon in E.coli strain BL21(DE3) induces flocculation and biofilm formation with copious extracellular fibrils. In Pseudomonas fluorescens, this protein is Functional amyloid subunit FapB.